The chain runs to 495 residues: uncharacterized protein (495 aa).

The CHY-type zinc finger occupies 389 to 457; it reads PLPNNGACEH…KDATCPHCGN (69 aa). Cys396, His398, Cys410, Cys411, Cys417, Cys420, His421, His427, Cys437, Cys440, Cys452, and Cys455 together coordinate Zn(2+). Residues 473-483 show a composition bias toward basic and acidic residues; the sequence is GMRDRVRMSRK. Residues 473-495 are disordered; the sequence is GMRDRVRMSRKDPRKYKRKHHGN. Residues 484–495 are compositionally biased toward basic residues; it reads DPRKYKRKHHGN.

It localises to the cytoplasm. This is an uncharacterized protein from Schizosaccharomyces pombe (strain 972 / ATCC 24843) (Fission yeast).